A 1086-amino-acid polypeptide reads, in one-letter code: Lon protease homolog, mitochondrial (1086 aa).

The N-terminal 55 residues, 1 to 55 (MLRTSCTSSLRRVVGKYVVSPLVASQIRFATSSVRSQPYLLNSELTELPAQFKRY), are a transit peptide targeting the mitochondrion. The interval 61 to 176 (TEKPEGDVPE…EPNEIVTNAG (116 aa)) is disordered. The segment covering 69-83 (PESGPEPSGESGISE) has biased composition (low complexity). Residues 85–120 (SNVENDKHDGNDEIKPEAEKNEKDEIEKPEIDKDAI) show a composition bias toward basic and acidic residues. Positions 124 to 163 (DGVSESSVENVSGSSSAAGGASAPPSGNSNNNNNNNNNNN) are enriched in low complexity. The region spanning 183 to 406 (LLAIPMKDRP…KALELLKVEL (224 aa)) is the Lon N-terminal domain. 558-565 (GPPGTGKT) contributes to the ATP binding site. Composition is skewed to basic and acidic residues over residues 767–782 (EARE…EAKS) and 815–827 (KVDE…SEEL). Disordered stretches follow at residues 767-788 (EARE…ITGS) and 800-835 (KAQS…EEEE). The Lon proteolytic domain occupies 871 to 1059 (IPPPGVATGL…QDVFDEIFPN (189 aa)). Catalysis depends on residues Ser965 and Lys1008.

It belongs to the peptidase S16 family. As to quaternary structure, homohexamer or homoheptamer. Organized in a ring with a central cavity.

The protein resides in the mitochondrion matrix. The catalysed reaction is Hydrolysis of proteins in presence of ATP.. Its function is as follows. ATP-dependent serine protease that mediates the selective degradation of misfolded, unassembled or oxidatively damaged polypeptides as well as certain short-lived regulatory proteins in the mitochondrial matrix. May also have a chaperone function in the assembly of inner membrane protein complexes. Participates in the regulation of mitochondrial gene expression and in the maintenance of the integrity of the mitochondrial genome. Binds to mitochondrial DNA in a site-specific manner. This is Lon protease homolog, mitochondrial from Scheffersomyces stipitis (strain ATCC 58785 / CBS 6054 / NBRC 10063 / NRRL Y-11545) (Yeast).